The sequence spans 151 residues: Small ribosomal subunit protein uS15y (151 aa).

Belongs to the universal ribosomal protein uS15 family.

This chain is Small ribosomal subunit protein uS15y (RPS13B), found in Arabidopsis thaliana (Mouse-ear cress).